The sequence spans 535 residues: Dimethylaniline monooxygenase [N-oxide-forming] 2 (535 aa).

Position 2 is an N-acetylalanine (alanine 2). Residues 9 to 13 (GAGVS), glutamate 32, 40 to 41 (LW), and 61 to 62 (NT) each bind FAD. Residues 60-61 (TN) and 195-198 (SASD) each bind NADP(+). Lysine 492 participates in a covalent cross-link: Glycyl lysine isopeptide (Lys-Gly) (interchain with G-Cter in SUMO). Residues 510–530 (LSASFLMKILALVAVFVAFFS) form a helical membrane-spanning segment.

Belongs to the FMO family. The cofactor is FAD. Requires Mg(2+) as cofactor. Lung.

The protein localises to the microsome membrane. The protein resides in the endoplasmic reticulum membrane. In terms of biological role, catalyzes the oxidative metabolism of numerous xenobiotics, including mainly therapeutic drugs and insecticides that contain a soft nucleophile, most commonly nitrogen and sulfur and participates to their bioactivation. The protein is Dimethylaniline monooxygenase [N-oxide-forming] 2 of Cavia porcellus (Guinea pig).